Reading from the N-terminus, the 394-residue chain is Elongation factor Tu (394 aa).

One can recognise a tr-type G domain in the interval 10-204 (KPHVNVGTIG…ALDTYIPEPE (195 aa)). The G1 stretch occupies residues 19–26 (GHVDHGKT). 19-26 (GHVDHGKT) provides a ligand contact to GTP. Threonine 26 lines the Mg(2+) pocket. Residues 60–64 (GITIA) form a G2 region. Residues 81-84 (DCPG) are G3. Residues 81–85 (DCPGH) and 136–139 (NKCD) contribute to the GTP site. The G4 stretch occupies residues 136–139 (NKCD). A G5 region spans residues 174 to 176 (SAL).

Belongs to the TRAFAC class translation factor GTPase superfamily. Classic translation factor GTPase family. EF-Tu/EF-1A subfamily. As to quaternary structure, monomer.

Its subcellular location is the cytoplasm. It catalyses the reaction GTP + H2O = GDP + phosphate + H(+). GTP hydrolase that promotes the GTP-dependent binding of aminoacyl-tRNA to the A-site of ribosomes during protein biosynthesis. The sequence is that of Elongation factor Tu from Vibrio parahaemolyticus serotype O3:K6 (strain RIMD 2210633).